Consider the following 421-residue polypeptide: D-amino acid dehydrogenase (421 aa).

An FAD-binding site is contributed by 3-17; sequence VLVLGGGVVGVASAY.

Belongs to the DadA oxidoreductase family. It depends on FAD as a cofactor.

It carries out the reaction a D-alpha-amino acid + A + H2O = a 2-oxocarboxylate + AH2 + NH4(+). It participates in amino-acid degradation; D-alanine degradation; NH(3) and pyruvate from D-alanine: step 1/1. Its function is as follows. Oxidative deamination of D-amino acids. The protein is D-amino acid dehydrogenase of Methylobacterium nodulans (strain LMG 21967 / CNCM I-2342 / ORS 2060).